A 182-amino-acid polypeptide reads, in one-letter code: Ribulose bisphosphate carboxylase small subunit, chloroplastic 4 (182 aa).

The N-terminal 41 residues, 1-41 (MAATMMNKTVVLSKGCTKPSAVPKVSINRKGFLNTAMNKKR), are a transit peptide targeting the chloroplast.

It belongs to the RuBisCO small chain family. As to quaternary structure, heterohexadecamer of 8 large and 8 small subunits.

The protein localises to the plastid. It localises to the chloroplast. Functionally, ruBisCO catalyzes two reactions: the carboxylation of D-ribulose 1,5-bisphosphate, the primary event in carbon dioxide fixation, as well as the oxidative fragmentation of the pentose substrate. Both reactions occur simultaneously and in competition at the same active site. Although the small subunit is not catalytic it is essential for maximal activity. This Acetabularia peniculus (Green alga) protein is Ribulose bisphosphate carboxylase small subunit, chloroplastic 4.